A 318-amino-acid chain; its full sequence is Formimidoylglutamase (318 aa).

Mn(2+) contacts are provided by histidine 130, aspartate 155, histidine 157, aspartate 159, aspartate 246, and aspartate 248.

The protein belongs to the arginase family. Mn(2+) serves as cofactor.

It carries out the reaction N-formimidoyl-L-glutamate + H2O = formamide + L-glutamate. The protein operates within amino-acid degradation; L-histidine degradation into L-glutamate; L-glutamate from N-formimidoyl-L-glutamate (hydrolase route): step 1/1. Its function is as follows. Catalyzes the conversion of N-formimidoyl-L-glutamate to L-glutamate and formamide. The chain is Formimidoylglutamase from Photorhabdus laumondii subsp. laumondii (strain DSM 15139 / CIP 105565 / TT01) (Photorhabdus luminescens subsp. laumondii).